Consider the following 318-residue polypeptide: MFLINVLTVTLPILLAVAFLTLVERKALGYMQLRKGPNVVGPYGLLQPIADAIKLFTKEPIYPQTSSKFLFTVAPILALTLALTVWAPLPMPYPLINLNLSLLFILAMSSLMVYSILWSGWASNSKYALMGALRAVAQTISYEVSMTTITLSMVLMNGSFTLTAFAMTQEHLWLILPMWPLMMMWFTSTLAETNRAPFDLTEGESELVSGFNVEYSAGPFALFFMAEYANIIMMNALTVILFMGTSYDPQMPEISTINFVMKTIILTICFLWVRASYPRFRYDQLMHLLWKNFLPLTLALCMWHISVLISLACIPPQA.

8 consecutive transmembrane segments (helical) span residues 2–22 (FLIN…FLTL), 69–89 (FLFT…WAPL), 102–122 (LLFI…SGWA), 146–166 (MTTI…TAFA), 171–191 (HLWL…STLA), 222–242 (LFFM…VILF), 253–273 (EIST…FLWV), and 294–314 (LPLT…LACI).

The protein belongs to the complex I subunit 1 family.

It is found in the mitochondrion inner membrane. The catalysed reaction is a ubiquinone + NADH + 5 H(+)(in) = a ubiquinol + NAD(+) + 4 H(+)(out). Core subunit of the mitochondrial membrane respiratory chain NADH dehydrogenase (Complex I) that is believed to belong to the minimal assembly required for catalysis. Complex I functions in the transfer of electrons from NADH to the respiratory chain. The immediate electron acceptor for the enzyme is believed to be ubiquinone. The protein is NADH-ubiquinone oxidoreductase chain 1 (MT-ND1) of Loxodonta africana (African elephant).